The primary structure comprises 189 residues: Homeobox protein HD-2 (189 aa).

The homeobox; TALE-type DNA-binding region spans 119-181 (KPRTRANFPM…NARRRILPFM (63 aa)).

The protein belongs to the TALE/KNOX homeobox family.

The protein resides in the nucleus. In Encephalitozoon cuniculi (strain GB-M1) (Microsporidian parasite), this protein is Homeobox protein HD-2 (HD-2).